The primary structure comprises 146 residues: Holo-[acyl-carrier-protein] synthase (146 aa).

Mg(2+) is bound by residues Asp8 and Glu61.

The protein belongs to the P-Pant transferase superfamily. AcpS family. Mg(2+) serves as cofactor.

Its subcellular location is the cytoplasm. The enzyme catalyses apo-[ACP] + CoA = holo-[ACP] + adenosine 3',5'-bisphosphate + H(+). Transfers the 4'-phosphopantetheine moiety from coenzyme A to a Ser of acyl-carrier-protein. This chain is Holo-[acyl-carrier-protein] synthase, found in Rhodopseudomonas palustris (strain ATCC BAA-98 / CGA009).